The following is a 266-amino-acid chain: Phage-like element PBSX protein XkdC (266 aa).

124-131 (GQPGSGKT) contributes to the ATP binding site.

To B.subtilis YqaM.

May function as a transcriptional antiterminator. The sequence is that of Phage-like element PBSX protein XkdC (xkdC) from Bacillus subtilis (strain 168).